The primary structure comprises 181 residues: MFGLKQFYQNEVRAKLAQELDIKNPMLLPKLEKIVISVGAGAHAKDMKIMQNIAQTISLIAGQKAVITKAKKSVAGFKIREGMAVGAKVTLRNKRMYNFLEKLIVISLPRVKDFRGISRNGFDGRGNYTFGINEQLIFPEVVYDDIMVSHGMNITMVTSTDSDKEAFKLLELLGLPFAKVR.

Belongs to the universal ribosomal protein uL5 family. As to quaternary structure, part of the 50S ribosomal subunit; part of the 5S rRNA/L5/L18/L25 subcomplex. Contacts the 5S rRNA and the P site tRNA. Forms a bridge to the 30S subunit in the 70S ribosome.

This is one of the proteins that bind and probably mediate the attachment of the 5S RNA into the large ribosomal subunit, where it forms part of the central protuberance. In the 70S ribosome it contacts protein S13 of the 30S subunit (bridge B1b), connecting the 2 subunits; this bridge is implicated in subunit movement. Contacts the P site tRNA; the 5S rRNA and some of its associated proteins might help stabilize positioning of ribosome-bound tRNAs. The protein is Large ribosomal subunit protein uL5 of Helicobacter pylori (strain Shi470).